The chain runs to 708 residues: tRNA 5-methylaminomethyl-2-thiouridine biosynthesis bifunctional protein MnmC (708 aa).

Residues 1–278 form a tRNA (mnm(5)s(2)U34)-methyltransferase region; it reads MTAEPNKPCQ…ERQVLRQQDA (278 aa). The interval 301 to 708 is FAD-dependent cmnm(5)s(2)U34 oxidoreductase; the sequence is IGGGLASAHL…LRKLLKGKAL (408 aa).

It in the N-terminal section; belongs to the methyltransferase superfamily. tRNA (mnm(5)s(2)U34)-methyltransferase family. This sequence in the C-terminal section; belongs to the DAO family. Requires FAD as cofactor.

The protein localises to the cytoplasm. It catalyses the reaction 5-aminomethyl-2-thiouridine(34) in tRNA + S-adenosyl-L-methionine = 5-methylaminomethyl-2-thiouridine(34) in tRNA + S-adenosyl-L-homocysteine + H(+). Its function is as follows. Catalyzes the last two steps in the biosynthesis of 5-methylaminomethyl-2-thiouridine (mnm(5)s(2)U) at the wobble position (U34) in tRNA. Catalyzes the FAD-dependent demodification of cmnm(5)s(2)U34 to nm(5)s(2)U34, followed by the transfer of a methyl group from S-adenosyl-L-methionine to nm(5)s(2)U34, to form mnm(5)s(2)U34. The polypeptide is tRNA 5-methylaminomethyl-2-thiouridine biosynthesis bifunctional protein MnmC (Shewanella baltica (strain OS195)).